Reading from the N-terminus, the 201-residue chain is Osmotically-inducible protein Y (201 aa).

Positions 1–28 (MTMTRLKISKTLLAVMLTSAVATGSAYA) are cleaved as a signal peptide. BON domains follow at residues 55 to 123 (DDSA…HVRD) and 134 to 201 (GDTA…LKTK).

Its subcellular location is the periplasm. The protein is Osmotically-inducible protein Y (osmY) of Escherichia coli (strain K12).